Consider the following 480-residue polypeptide: Glycogen synthase (480 aa).

Belongs to the glycosyltransferase 1 family. Bacterial/plant glycogen synthase subfamily.

The enzyme catalyses [(1-&gt;4)-alpha-D-glucosyl](n) + ADP-alpha-D-glucose = [(1-&gt;4)-alpha-D-glucosyl](n+1) + ADP + H(+). The protein operates within glycan biosynthesis; glycogen biosynthesis. In terms of biological role, synthesizes alpha-1,4-glucan chains using ADP-glucose. The protein is Glycogen synthase of Rhizobium etli (strain ATCC 51251 / DSM 11541 / JCM 21823 / NBRC 15573 / CFN 42).